Reading from the N-terminus, the 440-residue chain is 3-phosphoshikimate 1-carboxyvinyltransferase (440 aa).

3-phosphoshikimate is bound by residues Lys-26, Ser-27, and Arg-31. Lys-26 contributes to the phosphoenolpyruvate binding site. Phosphoenolpyruvate contacts are provided by Gly-99 and Arg-127. 3-phosphoshikimate-binding residues include Ser-172, Gln-174, Asp-320, and Lys-347. Gln-174 contributes to the phosphoenolpyruvate binding site. The active-site Proton acceptor is the Asp-320. Phosphoenolpyruvate is bound by residues Arg-351 and Arg-392.

Belongs to the EPSP synthase family. As to quaternary structure, monomer.

Its subcellular location is the cytoplasm. It catalyses the reaction 3-phosphoshikimate + phosphoenolpyruvate = 5-O-(1-carboxyvinyl)-3-phosphoshikimate + phosphate. Its pathway is metabolic intermediate biosynthesis; chorismate biosynthesis; chorismate from D-erythrose 4-phosphate and phosphoenolpyruvate: step 6/7. Functionally, catalyzes the transfer of the enolpyruvyl moiety of phosphoenolpyruvate (PEP) to the 5-hydroxyl of shikimate-3-phosphate (S3P) to produce enolpyruvyl shikimate-3-phosphate and inorganic phosphate. This chain is 3-phosphoshikimate 1-carboxyvinyltransferase, found in Xanthomonas euvesicatoria pv. vesicatoria (strain 85-10) (Xanthomonas campestris pv. vesicatoria).